The following is a 119-amino-acid chain: Large ribosomal subunit protein uL18 (119 aa).

The protein belongs to the universal ribosomal protein uL18 family. In terms of assembly, part of the 50S ribosomal subunit; part of the 5S rRNA/L5/L18/L25 subcomplex. Contacts the 5S and 23S rRNAs.

Its function is as follows. This is one of the proteins that bind and probably mediate the attachment of the 5S RNA into the large ribosomal subunit, where it forms part of the central protuberance. This chain is Large ribosomal subunit protein uL18, found in Clostridium kluyveri (strain ATCC 8527 / DSM 555 / NBRC 12016 / NCIMB 10680 / K1).